Reading from the N-terminus, the 390-residue chain is Outer membrane protein assembly factor BamB (390 aa).

The N-terminal stretch at Met1–Gly25 is a signal peptide. Residue Cys26 is the site of N-palmitoyl cysteine attachment. Cys26 carries the S-diacylglycerol cysteine lipid modification.

It belongs to the BamB family. In terms of assembly, part of the Bam complex.

It is found in the cell outer membrane. Functionally, part of the outer membrane protein assembly complex, which is involved in assembly and insertion of beta-barrel proteins into the outer membrane. The protein is Outer membrane protein assembly factor BamB of Marinobacter adhaerens (strain DSM 23420 / HP15).